Consider the following 351-residue polypeptide: Photosystem II D2 protein (351 aa).

The chain crosses the membrane as a helical span at residues cysteine 39 to threonine 59. Histidine 116 contacts chlorophyll a. A helical membrane pass occupies residues glycine 123–proline 139. Residues glutamine 128 and asparagine 141 each contribute to the pheophytin a site. Residues valine 151–serine 164 traverse the membrane as a helical segment. Histidine 196 contacts chlorophyll a. The helical transmembrane segment at glycine 206–glutamate 226 threads the bilayer. 2 residues coordinate a plastoquinone: histidine 213 and phenylalanine 260. Histidine 213 contacts Fe cation. Fe cation is bound at residue histidine 267. The helical transmembrane segment at glycine 277–arginine 293 threads the bilayer.

It belongs to the reaction center PufL/M/PsbA/D family. In terms of assembly, PSII is composed of 1 copy each of membrane proteins PsbA, PsbB, PsbC, PsbD, PsbE, PsbF, PsbH, PsbI, PsbJ, PsbK, PsbL, PsbM, PsbT, PsbX, PsbY, PsbZ, Psb30/Ycf12, peripheral proteins PsbO, CyanoQ (PsbQ), PsbU, PsbV and a large number of cofactors. It forms dimeric complexes. The D1/D2 heterodimer binds P680, chlorophylls that are the primary electron donor of PSII, and subsequent electron acceptors. It shares a non-heme iron and each subunit binds pheophytin, quinone, additional chlorophylls, carotenoids and lipids. There is also a Cl(-1) ion associated with D1 and D2, which is required for oxygen evolution. The PSII complex binds additional chlorophylls, carotenoids and specific lipids. serves as cofactor.

The protein localises to the cellular thylakoid membrane. It carries out the reaction 2 a plastoquinone + 4 hnu + 2 H2O = 2 a plastoquinol + O2. Photosystem II (PSII) is a light-driven water:plastoquinone oxidoreductase that uses light energy to abstract electrons from H(2)O, generating O(2) and a proton gradient subsequently used for ATP formation. It consists of a core antenna complex that captures photons, and an electron transfer chain that converts photonic excitation into a charge separation. The D1/D2 (PsbA/PsbD) reaction center heterodimer binds P680, the primary electron donor of PSII as well as several subsequent electron acceptors. D2 is needed for assembly of a stable PSII complex. This chain is Photosystem II D2 protein, found in Nostoc sp. (strain PCC 7120 / SAG 25.82 / UTEX 2576).